The chain runs to 599 residues: Laccase-2 (599 aa).

Positions 1–19 are cleaved as a signal peptide; the sequence is MARSTTSLFALSLVASAFA. Plastocyanin-like domains follow at residues 21 to 145 and 157 to 307; these read VVDY…IVIY and VDDE…LVYE. Cu cation contacts are provided by histidine 82, histidine 84, histidine 127, and histidine 129. Cysteine 103 and cysteine 588 form a disulfide bridge. 5 N-linked (GlcNAc...) asparagine glycosylation sites follow: asparagine 207, asparagine 208, asparagine 231, asparagine 397, and asparagine 443. The region spanning 450–567 is the Plastocyanin-like 3 domain; that stretch reads DVPTLLKILT…EGFAMVFAEA (118 aa). Cu cation is bound by residues histidine 497, histidine 500, histidine 502, histidine 549, cysteine 550, histidine 551, and histidine 555.

Belongs to the multicopper oxidase family. As to quaternary structure, homodimer. It depends on Cu cation as a cofactor. As to expression, in mycelia, at a lower level than LCC4.

Its subcellular location is the secreted. It catalyses the reaction 4 hydroquinone + O2 = 4 benzosemiquinone + 2 H2O. Lignin degradation and detoxification of lignin-derived products. In Thanatephorus cucumeris (Black scurf of potato), this protein is Laccase-2 (LCC2).